Reading from the N-terminus, the 170-residue chain is Adenine phosphoribosyltransferase (170 aa).

The protein belongs to the purine/pyrimidine phosphoribosyltransferase family. As to quaternary structure, homodimer.

The protein localises to the cytoplasm. It catalyses the reaction AMP + diphosphate = 5-phospho-alpha-D-ribose 1-diphosphate + adenine. Its pathway is purine metabolism; AMP biosynthesis via salvage pathway; AMP from adenine: step 1/1. Its function is as follows. Catalyzes a salvage reaction resulting in the formation of AMP, that is energically less costly than de novo synthesis. The protein is Adenine phosphoribosyltransferase of Brevibacillus brevis (strain 47 / JCM 6285 / NBRC 100599).